The chain runs to 54 residues: UPF0391 membrane protein pRL90066 (54 aa).

A run of 2 helical transmembrane segments spans residues Ala5–Gly25 and Ala28–Met48.

This sequence belongs to the UPF0391 family.

It is found in the cell membrane. This is UPF0391 membrane protein pRL90066 from Rhizobium johnstonii (strain DSM 114642 / LMG 32736 / 3841) (Rhizobium leguminosarum bv. viciae).